The sequence spans 760 residues: 5-methyltetrahydropteroyltriglutamate--homocysteine methyltransferase (760 aa).

5-methyltetrahydropteroyltri-L-glutamate-binding positions include 17–20 and Lys118; that span reads RELK. L-homocysteine is bound by residues 434-436 and Glu487; that span reads IGS. L-methionine contacts are provided by residues 434–436 and Glu487; that span reads IGS. 5-methyltetrahydropteroyltri-L-glutamate is bound by residues 518–519 and Trp564; that span reads RC. Position 602 (Asp602) interacts with L-homocysteine. Position 602 (Asp602) interacts with L-methionine. Glu608 is a 5-methyltetrahydropteroyltri-L-glutamate binding site. Zn(2+) contacts are provided by His644, Cys646, and Glu668. Residue His697 is the Proton donor of the active site. Cys729 lines the Zn(2+) pocket.

Belongs to the vitamin-B12 independent methionine synthase family. Requires Zn(2+) as cofactor.

The catalysed reaction is 5-methyltetrahydropteroyltri-L-glutamate + L-homocysteine = tetrahydropteroyltri-L-glutamate + L-methionine. It participates in amino-acid biosynthesis; L-methionine biosynthesis via de novo pathway; L-methionine from L-homocysteine (MetE route): step 1/1. Its function is as follows. Catalyzes the transfer of a methyl group from 5-methyltetrahydrofolate to homocysteine resulting in methionine formation. The chain is 5-methyltetrahydropteroyltriglutamate--homocysteine methyltransferase from Buchnera aphidicola subsp. Cinara cedri (strain Cc).